Reading from the N-terminus, the 237-residue chain is Ras-related protein RABA3 (237 aa).

35–42 is a GTP binding site; it reads GDSAVGKT. Residues 57-65 carry the Effector region motif; sequence SKSTIGVEF. Residues 83 to 87, 141 to 144, and 172 to 173 each bind GTP; these read DTAGQ, NKAD, and SA. 2 S-geranylgeranyl cysteine lipidation sites follow: C235 and C237. The residue at position 237 (C237) is a Cysteine methyl ester.

The protein belongs to the small GTPase superfamily. Rab family. As to expression, expressed in root tips.

It localises to the endosome membrane. It is found in the golgi apparatus. The protein localises to the trans-Golgi network membrane. Intracellular vesicle trafficking and protein transport. This chain is Ras-related protein RABA3 (RABA3), found in Arabidopsis thaliana (Mouse-ear cress).